The primary structure comprises 616 residues: DNA-binding protein RFX5 (616 aa).

A disordered region spans residues 1 to 29 (MAEDEPDAKSPKTGGRAPPGGAEAGEPTT). N-acetylalanine is present on Ala2. Ser10 bears the Phosphoserine mark. Positions 13-29 (TGGRAPPGGAEAGEPTT) are enriched in low complexity. The tract at residues 25-90 (GEPTTLLQRL…PSTLSNEEYM (66 aa)) is N-terminal domain. The interval 62-66 (LYLYL) is leucine-rich region; critical for dimer formation and for interaction with RFXAP. Residues 92 to 168 (AYRWIRNHLE…YCYSGIRRKT (77 aa)) constitute a DNA-binding region (RFX-type winged-helix). The PxLPxI/L motif; mediates interaction with RFXANK motif lies at 173 to 178 (PPLPGL). Ser185 bears the Phosphoserine mark. Disordered regions lie at residues 252–314 (AEED…ESSA) and 391–616 (LPGP…ATPP). Residues 276–293 (GAHKKPERLAQPPKDLEA) show a composition bias toward basic and acidic residues. Residues 391 to 401 (LPGPGPGPGRA) show a composition bias toward pro residues. Residues 424 to 434 (GPHDKGVKRTA) show a composition bias toward basic and acidic residues. Positions 463–473 (KRKRGRPRKKS) are enriched in basic residues. Positions 534–546 (QGDGTVSKGGRGP) are enriched in gly residues. A compositionally biased stretch (basic and acidic residues) spans 606-616 (QEHKDPKATPP).

Belongs to the RFX family. Homodimer. The RFX heterotetrameric complex consists of 2 molecules of RFX5 and one each of RFXAP and RFX-B/RFXANK; with each subunit representing a separate complementation group. Interacts (via PxLPxI/L motif) with RFXANK (via ankyrin repeats); the interaction is direct. RFX forms cooperative DNA binding complexes with X2BP and CBF/NF-Y. RFX associates with CIITA to form an active transcriptional complex. Phosphorylated. As to expression, ubiquitous.

It is found in the nucleus. In terms of biological role, activates transcription from class II MHC promoters. Recognizes X-boxes. Mediates cooperative binding between RFX and NF-Y. RFX binds the X1 box of MHC-II promoters. This chain is DNA-binding protein RFX5 (RFX5), found in Homo sapiens (Human).